The sequence spans 120 residues: UPF0231 protein YacL (120 aa).

This sequence belongs to the UPF0231 family.

The chain is UPF0231 protein YacL from Salmonella heidelberg (strain SL476).